A 485-amino-acid polypeptide reads, in one-letter code: Aspartyl/glutamyl-tRNA(Asn/Gln) amidotransferase subunit B (485 aa).

The protein belongs to the GatB/GatE family. GatB subfamily. In terms of assembly, heterotrimer of A, B and C subunits.

It carries out the reaction L-glutamyl-tRNA(Gln) + L-glutamine + ATP + H2O = L-glutaminyl-tRNA(Gln) + L-glutamate + ADP + phosphate + H(+). It catalyses the reaction L-aspartyl-tRNA(Asn) + L-glutamine + ATP + H2O = L-asparaginyl-tRNA(Asn) + L-glutamate + ADP + phosphate + 2 H(+). In terms of biological role, allows the formation of correctly charged Asn-tRNA(Asn) or Gln-tRNA(Gln) through the transamidation of misacylated Asp-tRNA(Asn) or Glu-tRNA(Gln) in organisms which lack either or both of asparaginyl-tRNA or glutaminyl-tRNA synthetases. The reaction takes place in the presence of glutamine and ATP through an activated phospho-Asp-tRNA(Asn) or phospho-Glu-tRNA(Gln). This is Aspartyl/glutamyl-tRNA(Asn/Gln) amidotransferase subunit B from Opitutus terrae (strain DSM 11246 / JCM 15787 / PB90-1).